Reading from the N-terminus, the 458-residue chain is MSVIFHENPGTSLGSVVPDTNTSFERESQLSVKTSPEWIDELFPNVSFIDSPTHQVIRGFCRDVFVYRLPGGFRVRYWDAVILVPNILFLLFLILKCGSVIRKLRTGNSPVLRAFTLLVYVSTLVNIIRCAYSMTLSMTDGLEQTVDQTLWIIIKFFYLTAEFCALTFGLLFGHLDNGKSILIALLGTLLVSIPHTAVQVIIEMKIIDNSWLPLTYFDIQSDGGFLFWVFSSAVLALVYFFIMCLPLVCCQKYTKLPSKGSFLIYCMMMVVLNVLQSMGAALILFKSSDGLCFVGVSTYVYFVLYPPIIYFTFLRKKLKTPPNNTSGLFMYRKHKDEQGSGDLPDSYYPRFSGLTSPSYDDLFDYDRDARFTHYDISRNEYVQNPHYNTYSTPLIMTSVETAESTVTTRTGSDDYAHHRDSMLSEPSTGTTTRHLKGLGPQGSLVFEDDPSSLTSLRM.

N-linked (GlcNAc...) asparagine glycans are attached at residues asparagine 21 and asparagine 45. A run of 7 helical transmembrane segments spans residues 81 to 101 (VILVPNILFLLFLILKCGSVI), 114 to 134 (AFTLLVYVSTLVNIIRCAYSM), 152 to 172 (IIIKFFYLTAEFCALTFGLLF), 181 to 201 (ILIALLGTLLVSIPHTAVQVI), 225 to 245 (FLFWVFSSAVLALVYFFIMCL), 263 to 283 (LIYCMMMVVLNVLQSMGAALI), and 291 to 311 (LCFVGVSTYVYFVLYPPIIYF). Asparagine 323 and asparagine 324 each carry an N-linked (GlcNAc...) asparagine glycan. The segment at 409-458 (RTGSDDYAHHRDSMLSEPSTGTTTRHLKGLGPQGSLVFEDDPSSLTSLRM) is disordered. Over residues 411–422 (GSDDYAHHRDSM) the composition is skewed to basic and acidic residues.

The protein belongs to the UPF0359 family.

It localises to the membrane. This chain is Transmembrane protein adipocyte-associated 1 homolog (tpra-1), found in Caenorhabditis elegans.